We begin with the raw amino-acid sequence, 390 residues long: Homeobox protein Meis1 (390 aa).

Residues 108 to 192 (GGDVCSSESF…IDLVIDDREG (85 aa)) form the MEIS N-terminal domain. Over residues 190 to 202 (REGGSKSDSEDIT) the composition is skewed to basic and acidic residues. Positions 190–279 (REGGSKSDSE…KKRHKKRGIF (90 aa)) are disordered. Residues 203-213 (RSANLTDQPSW) are compositionally biased toward polar residues. A DNA-binding region (homeobox; TALE-type) is located at residues 272–334 (RHKKRGIFPK…NARRRIVQPM (63 aa)). The interval 299-329 (YPSEEQKKQLAQDTGLTILQVNNWFINARRR) is interaction with DNA. The tract at residues 335–390 (IDQSNRAVSQGTPYNPDGQPMGGFVMDGQQHMGIRAPGPMSGMGMNMGMEGQWHYM) is required for transcriptional activation.

The protein belongs to the TALE/MEIS homeobox family. As to quaternary structure, interacts with the N-terminal region of PBX1 to form a heterodimer which binds DNA including a cAMP-responsive sequence in CYP17. Also forms heterodimers with PBX2. Forms heterotrimers with PBX1 or PBX2 and a number of HOX proteins including HOXA9, HOXD4 and HOXD9 where it acts as a non-DNA-binding partner. Also forms heterotrimers with PBX1 and HOX proteins including HOXD9 and HOXD10 where PBX1 is the non-DNA-binding partner. Heterodimer with DLX3. Heterodimer with HOXB13. In terms of tissue distribution, expressed at low level in normal immunohepatopoietic tissues, including the fetal liver. Expressed in a subset of myeloid leukemia cell lines, with the highest expression seen in those with a megakaryocytic-erythroid phenotype. Also expressed at high levels in the cerebellum.

The protein localises to the nucleus. Functionally, acts as a transcriptional regulator of PAX6. Acts as a transcriptional activator of PF4 in complex with PBX1 or PBX2. Required for hematopoiesis, megakaryocyte lineage development and vascular patterning. May function as a cofactor for HOXA7 and HOXA9 in the induction of myeloid leukemias. In Homo sapiens (Human), this protein is Homeobox protein Meis1 (MEIS1).